The following is a 694-amino-acid chain: Elongation factor G 2 (694 aa).

The 276-residue stretch at 5–280 (SKYRNIGIFA…AVVDYLPSPT (276 aa)) folds into the tr-type G domain. Residues 14-21 (AHVDAGKT), 78-82 (DTPGH), and 132-135 (NKLD) contribute to the GTP site.

The protein belongs to the TRAFAC class translation factor GTPase superfamily. Classic translation factor GTPase family. EF-G/EF-2 subfamily.

The protein resides in the cytoplasm. Functionally, catalyzes the GTP-dependent ribosomal translocation step during translation elongation. During this step, the ribosome changes from the pre-translocational (PRE) to the post-translocational (POST) state as the newly formed A-site-bound peptidyl-tRNA and P-site-bound deacylated tRNA move to the P and E sites, respectively. Catalyzes the coordinated movement of the two tRNA molecules, the mRNA and conformational changes in the ribosome. This Pseudoalteromonas translucida (strain TAC 125) protein is Elongation factor G 2.